A 246-amino-acid chain; its full sequence is 1-(5-phosphoribosyl)-5-[(5-phosphoribosylamino)methylideneamino] imidazole-4-carboxamide isomerase (246 aa).

Asp-8 serves as the catalytic Proton acceptor. The active-site Proton donor is Asp-131.

It belongs to the HisA/HisF family.

It is found in the cytoplasm. The catalysed reaction is 1-(5-phospho-beta-D-ribosyl)-5-[(5-phospho-beta-D-ribosylamino)methylideneamino]imidazole-4-carboxamide = 5-[(5-phospho-1-deoxy-D-ribulos-1-ylimino)methylamino]-1-(5-phospho-beta-D-ribosyl)imidazole-4-carboxamide. The protein operates within amino-acid biosynthesis; L-histidine biosynthesis; L-histidine from 5-phospho-alpha-D-ribose 1-diphosphate: step 4/9. This Albidiferax ferrireducens (strain ATCC BAA-621 / DSM 15236 / T118) (Rhodoferax ferrireducens) protein is 1-(5-phosphoribosyl)-5-[(5-phosphoribosylamino)methylideneamino] imidazole-4-carboxamide isomerase.